A 338-amino-acid polypeptide reads, in one-letter code: 4-hydroxythreonine-4-phosphate dehydrogenase (338 aa).

Substrate contacts are provided by H139 and T140. A divalent metal cation is bound by residues H169, H214, and H270. Substrate-binding residues include K278, N287, and R296.

Belongs to the PdxA family. In terms of assembly, homodimer. Requires Zn(2+) as cofactor. It depends on Mg(2+) as a cofactor. The cofactor is Co(2+).

The protein resides in the cytoplasm. It carries out the reaction 4-(phosphooxy)-L-threonine + NAD(+) = 3-amino-2-oxopropyl phosphate + CO2 + NADH. Its pathway is cofactor biosynthesis; pyridoxine 5'-phosphate biosynthesis; pyridoxine 5'-phosphate from D-erythrose 4-phosphate: step 4/5. In terms of biological role, catalyzes the NAD(P)-dependent oxidation of 4-(phosphooxy)-L-threonine (HTP) into 2-amino-3-oxo-4-(phosphooxy)butyric acid which spontaneously decarboxylates to form 3-amino-2-oxopropyl phosphate (AHAP). The sequence is that of 4-hydroxythreonine-4-phosphate dehydrogenase from Desulfosudis oleivorans (strain DSM 6200 / JCM 39069 / Hxd3) (Desulfococcus oleovorans).